The primary structure comprises 144 residues: Vasopressin-neurophysin 2-copeptin (144 aa).

Cysteine 1 and cysteine 6 form a disulfide bridge. Glycine 9 bears the Glycine amide mark. 7 cysteine pairs are disulfide-bonded: cysteine 22–cysteine 66, cysteine 25–cysteine 39, cysteine 33–cysteine 56, cysteine 40–cysteine 46, cysteine 73–cysteine 85, cysteine 79–cysteine 97, and cysteine 86–cysteine 91. Asparagine 112 carries an N-linked (GlcNAc...) asparagine glycan.

Belongs to the vasopressin/oxytocin family. In terms of assembly, interacts with vasopressin receptors V1bR/AVPR1B (Ki=85 pM), V1aR/AVPR1A (Ki=0.6 nM) and V2R/AVPR2 (Ki=4.9 nM). Interacts with oxytocin receptor (OXTR) (Ki=110 nM).

The protein localises to the secreted. Functionally, neurophysin 2 specifically binds vasopressin. Its function is as follows. Vasopressin has a direct antidiuretic action on the kidney, it also causes vasoconstriction of the peripheral vessels. Acts by binding to vasopressin receptors (V1bR/AVPR1B, V1aR/AVPR1A, and V2R/AVPR2). The protein is Vasopressin-neurophysin 2-copeptin (AVP) of Cavia porcellus (Guinea pig).